The chain runs to 467 residues: Asparagine--tRNA ligase (467 aa).

This sequence belongs to the class-II aminoacyl-tRNA synthetase family. As to quaternary structure, homodimer.

The protein localises to the cytoplasm. It catalyses the reaction tRNA(Asn) + L-asparagine + ATP = L-asparaginyl-tRNA(Asn) + AMP + diphosphate + H(+). In Histophilus somni (strain 2336) (Haemophilus somnus), this protein is Asparagine--tRNA ligase.